A 130-amino-acid polypeptide reads, in one-letter code: Small ribosomal subunit protein uS9 (130 aa).

The protein belongs to the universal ribosomal protein uS9 family.

The sequence is that of Small ribosomal subunit protein uS9 from Janthinobacterium sp. (strain Marseille) (Minibacterium massiliensis).